Reading from the N-terminus, the 320-residue chain is Aspartate carbamoyltransferase catalytic subunit (320 aa).

Positions 68 and 69 each coordinate carbamoyl phosphate. Residue Lys96 coordinates L-aspartate. Carbamoyl phosphate contacts are provided by Arg118, His148, and Gln151. Arg181 and Arg236 together coordinate L-aspartate. Carbamoyl phosphate is bound by residues Gly277 and Pro278.

This sequence belongs to the aspartate/ornithine carbamoyltransferase superfamily. ATCase family. Heterododecamer (2C3:3R2) of six catalytic PyrB chains organized as two trimers (C3), and six regulatory PyrI chains organized as three dimers (R2).

The catalysed reaction is carbamoyl phosphate + L-aspartate = N-carbamoyl-L-aspartate + phosphate + H(+). The protein operates within pyrimidine metabolism; UMP biosynthesis via de novo pathway; (S)-dihydroorotate from bicarbonate: step 2/3. Its function is as follows. Catalyzes the condensation of carbamoyl phosphate and aspartate to form carbamoyl aspartate and inorganic phosphate, the committed step in the de novo pyrimidine nucleotide biosynthesis pathway. The chain is Aspartate carbamoyltransferase catalytic subunit from Leptothrix cholodnii (strain ATCC 51168 / LMG 8142 / SP-6) (Leptothrix discophora (strain SP-6)).